Consider the following 418-residue polypeptide: Gamma-glutamyl phosphate reductase (418 aa).

It belongs to the gamma-glutamyl phosphate reductase family.

It is found in the cytoplasm. The catalysed reaction is L-glutamate 5-semialdehyde + phosphate + NADP(+) = L-glutamyl 5-phosphate + NADPH + H(+). Its pathway is amino-acid biosynthesis; L-proline biosynthesis; L-glutamate 5-semialdehyde from L-glutamate: step 2/2. Functionally, catalyzes the NADPH-dependent reduction of L-glutamate 5-phosphate into L-glutamate 5-semialdehyde and phosphate. The product spontaneously undergoes cyclization to form 1-pyrroline-5-carboxylate. In Dechloromonas aromatica (strain RCB), this protein is Gamma-glutamyl phosphate reductase.